A 320-amino-acid chain; its full sequence is Malate dehydrogenase (320 aa).

NAD(+) is bound by residues 10–15 (GSGMIG) and D34. Substrate contacts are provided by R83 and R89. NAD(+) is bound by residues N96 and 119–121 (ITN). Substrate contacts are provided by N121 and R152. Catalysis depends on H176, which acts as the Proton acceptor.

Belongs to the LDH/MDH superfamily. MDH type 3 family.

The enzyme catalyses (S)-malate + NAD(+) = oxaloacetate + NADH + H(+). Functionally, catalyzes the reversible oxidation of malate to oxaloacetate. This is Malate dehydrogenase from Rhizobium etli (strain CIAT 652).